Here is a 510-residue protein sequence, read N- to C-terminus: Histidine ammonia-lyase (510 aa).

A cross-link (5-imidazolinone (Ala-Gly)) is located at residues 143–145 (ASG). S144 carries the post-translational modification 2,3-didehydroalanine (Ser).

The protein belongs to the PAL/histidase family. Contains an active site 4-methylidene-imidazol-5-one (MIO), which is formed autocatalytically by cyclization and dehydration of residues Ala-Ser-Gly.

The protein localises to the cytoplasm. It catalyses the reaction L-histidine = trans-urocanate + NH4(+). The protein operates within amino-acid degradation; L-histidine degradation into L-glutamate; N-formimidoyl-L-glutamate from L-histidine: step 1/3. This chain is Histidine ammonia-lyase, found in Pseudomonas putida (strain ATCC 47054 / DSM 6125 / CFBP 8728 / NCIMB 11950 / KT2440).